The following is a 387-amino-acid chain: Cyclin-B1-4 (387 aa).

Residues 1–29 (MASSRVSDLPHQRGIAGEIKPKNVAGHGR) are disordered.

It belongs to the cyclin family. Cyclin AB subfamily.

In Arabidopsis thaliana (Mouse-ear cress), this protein is Cyclin-B1-4 (CYCB1-4).